The primary structure comprises 65 residues: U11-theraphotoxin-Cg1a (65 aa).

A signal peptide spans 1–21 (MKTTILLVILGLTLLFALSAA). A propeptide spanning residues 22–29 (TELKDEER) is cleaved from the precursor. 3 disulfides stabilise this stretch: Cys-31/Cys-45, Cys-38/Cys-50, and Cys-44/Cys-57.

Belongs to the neurotoxin 10 (Hwtx-1) family. 32 (Jztx-16) subfamily. Expressed by the venom gland.

Its subcellular location is the secreted. Probable ion channel inhibitor. The protein is U11-theraphotoxin-Cg1a of Chilobrachys guangxiensis (Chinese earth tiger tarantula).